We begin with the raw amino-acid sequence, 239 residues long: Methylthioribulose-1-phosphate dehydratase (239 aa).

Residue Cys-94 coordinates substrate. The Zn(2+) site is built by His-112 and His-114. The Proton donor/acceptor role is filled by Glu-136. His-192 contacts Zn(2+).

This sequence belongs to the aldolase class II family. MtnB subfamily. Zn(2+) is required as a cofactor.

It localises to the cytoplasm. It carries out the reaction 5-(methylsulfanyl)-D-ribulose 1-phosphate = 5-methylsulfanyl-2,3-dioxopentyl phosphate + H2O. The protein operates within amino-acid biosynthesis; L-methionine biosynthesis via salvage pathway; L-methionine from S-methyl-5-thio-alpha-D-ribose 1-phosphate: step 2/6. In terms of biological role, catalyzes the dehydration of methylthioribulose-1-phosphate (MTRu-1-P) into 2,3-diketo-5-methylthiopentyl-1-phosphate (DK-MTP-1-P). Functions in the methionine salvage pathway. May play a role in apoptosis. The sequence is that of Methylthioribulose-1-phosphate dehydratase from Xenopus laevis (African clawed frog).